Reading from the N-terminus, the 177-residue chain is Probable inosine/xanthosine triphosphatase (177 aa).

This sequence belongs to the YjjX NTPase family. Homodimer. Mg(2+) is required as a cofactor. It depends on Mn(2+) as a cofactor.

It carries out the reaction XTP + H2O = XDP + phosphate + H(+). The catalysed reaction is ITP + H2O = IDP + phosphate + H(+). Its function is as follows. Phosphatase that hydrolyzes non-canonical purine nucleotides such as XTP and ITP to their respective diphosphate derivatives. Probably excludes non-canonical purines from DNA/RNA precursor pool, thus preventing their incorporation into DNA/RNA and avoiding chromosomal lesions. This chain is Probable inosine/xanthosine triphosphatase, found in Pyrobaculum islandicum (strain DSM 4184 / JCM 9189 / GEO3).